A 312-amino-acid polypeptide reads, in one-letter code: tRNA dimethylallyltransferase (312 aa).

Position 13–20 (Gly13–Thr20) interacts with ATP. Thr15–Thr20 serves as a coordination point for substrate. 3 interaction with substrate tRNA regions span residues Asp38–Met41, Gln162–Arg166, and Arg244–Arg249.

Belongs to the IPP transferase family. In terms of assembly, monomer. The cofactor is Mg(2+).

The enzyme catalyses adenosine(37) in tRNA + dimethylallyl diphosphate = N(6)-dimethylallyladenosine(37) in tRNA + diphosphate. In terms of biological role, catalyzes the transfer of a dimethylallyl group onto the adenine at position 37 in tRNAs that read codons beginning with uridine, leading to the formation of N6-(dimethylallyl)adenosine (i(6)A). This is tRNA dimethylallyltransferase from Chromohalobacter salexigens (strain ATCC BAA-138 / DSM 3043 / CIP 106854 / NCIMB 13768 / 1H11).